A 162-amino-acid polypeptide reads, in one-letter code: MSVLAIIFLLNLKPTIYSIVGIFLIIILDVTVAVALYFLLRPVSKNISMLMSLFRIVYAAIFTTALYKIHDLTAFYSILDLGYIFFGIHLFLLGFLVYKSGYMPKWLGALIFIASTGYIIDPLLRFSGYAVEIGMYTFFGEVLFAFWLVIKGRKLSEVVSTP.

A run of 5 helical transmembrane segments spans residues 15-40, 47-66, 76-98, 105-124, and 128-150; these read TIYS…YFLL, ISML…TTAL, YSIL…FLVY, KWLG…DPLL, and GYAV…WLVI.

The protein resides in the cell membrane. This is an uncharacterized protein from Archaeoglobus fulgidus (strain ATCC 49558 / DSM 4304 / JCM 9628 / NBRC 100126 / VC-16).